Reading from the N-terminus, the 302-residue chain is MALGTKHVLHLTKPSSRSSPLNIVIEPAVLFSILDHSTRKSENNQRVIGTLLGTRSEDGREIEIKSCFAVPHNESSEQVEVEMEYHRAMYHLHLKANPREVVVGWYATSPDLDAFSALIQNLYASPAEPGTAPLGTYPHPCVHLTVNTDVSSPLAIKTYVSSPVGITERLADSCAFVPTPFTIRDDEAVRSGLKAVAAPKNDPSRLASLFTDLQQLRRSTLELLSMIERVSDYVQNVIDGSSPANVAVGRYLMKCFSLIPCVEGQDFEKIFSSHLQDVLVVVYLANTLRTQVDIASRLNLLP.

Residues 23–165 (IVIEPAVLFS…IKTYVSSPVG (143 aa)) form the MPN domain. The residue at position 162 (serine 162) is a Phosphoserine.

It belongs to the eIF-3 subunit F family. In terms of assembly, component of the eukaryotic translation initiation factor 3 (eIF-3) complex. The eIF-3 complex appears to include tif32/eif3a, SPAC25G10.08/eif3b, tif33/eif3c, SPBC4C3.07/eif3f, tif35/eif3g and sum1/eif3i. This set of common subunits may also associate exclusively with either moe1/eif3d and int6/eif3e, or with SPAC821.05/eif3h and SPAC1751.03/eif3m. The eIF-3 complex may also include SPAC3A12.13c/eif3j.

The protein resides in the cytoplasm. Component of the eukaryotic translation initiation factor 3 (eIF-3) complex, which is involved in protein synthesis of a specialized repertoire of mRNAs and, together with other initiation factors, stimulates binding of mRNA and methionyl-tRNAi to the 40S ribosome. The eIF-3 complex specifically targets and initiates translation of a subset of mRNAs involved in cell proliferation. This Schizosaccharomyces pombe (strain 972 / ATCC 24843) (Fission yeast) protein is Eukaryotic translation initiation factor 3 subunit F.